Here is a 506-residue protein sequence, read N- to C-terminus: Cytochrome P450 71B8 (506 aa).

The chain crosses the membrane as a helical span at residues 5–25; that stretch reads ILLCFFFLFPLLLTLFKKLLP. A heme-binding site is contributed by Cys-443.

Belongs to the cytochrome P450 family. It depends on heme as a cofactor.

The protein resides in the membrane. This Arabidopsis thaliana (Mouse-ear cress) protein is Cytochrome P450 71B8 (CYP71B8).